We begin with the raw amino-acid sequence, 1259 residues long: Receptor tyrosine-protein kinase erbB-2 (1259 aa).

The first 22 residues, 1 to 22 (MELAAWCRWGLLLALLPSGAAG), serve as a signal peptide directing secretion. The Extracellular segment spans residues 23 to 653 (TQVCTGTDMK…EQRASPVTSI (631 aa)). Cys-26 and Cys-53 are oxidised to a cystine. Residue Asn-68 is glycosylated (N-linked (GlcNAc...) asparagine). Disulfide bonds link Cys-162/Cys-192, Cys-195/Cys-204, Cys-199/Cys-212, Cys-220/Cys-227, Cys-224/Cys-235, Cys-236/Cys-244, Cys-240/Cys-252, Cys-255/Cys-264, Cys-268/Cys-295, Cys-299/Cys-311, Cys-315/Cys-331, Cys-334/Cys-338, and Cys-342/Cys-367. A Phosphothreonine modification is found at Thr-182. Asn-259 is a glycosylation site (N-linked (GlcNAc...) asparagine). Asn-421 carries N-linked (GlcNAc...) asparagine glycosylation. Disulfide bonds link Cys-475–Cys-504, Cys-511–Cys-519, and Cys-514–Cys-527. N-linked (GlcNAc...) asparagine glycosylation occurs at Asn-529. Disulfide bonds link Cys-530–Cys-539, Cys-543–Cys-559, Cys-562–Cys-575, Cys-566–Cys-583, Cys-586–Cys-595, Cys-599–Cys-622, Cys-625–Cys-633, and Cys-629–Cys-641. A glycan (N-linked (GlcNAc...) asparagine) is linked at Asn-570. Asn-628 is a glycosylation site (N-linked (GlcNAc...) asparagine). A helical membrane pass occupies residues 654 to 674 (IAAVVGILLAVVVGLVLGILI). The required for interaction with KPNB1 and EEA1 stretch occupies residues 675–688 (KRRRQKIRKYTMRR). A Nuclear localization signal motif is present at residues 675–688 (KRRRQKIRKYTMRR). Residues 675-1259 (KRRRQKIRKY…PEYLGLDVPV (585 aa)) are Cytoplasmic-facing. One can recognise a Protein kinase domain in the interval 719-986 (LRKVKVLGSG…RMARDPQRFV (268 aa)). ATP contacts are provided by residues 725-733 (LGSGAFGTV) and Lys-752. Catalysis depends on Asp-844, which acts as the Proton acceptor. Phosphotyrosine is present on Tyr-876. Residues 1027 to 1183 (QGFFCPEPTP…PKTLSPGKNG (157 aa)) form a disordered region. Residues Ser-1077, Ser-1082, and Ser-1106 each carry the phosphoserine modification. The residue at position 1111 (Tyr-1111) is a Phosphotyrosine. Tyr-1138 bears the Phosphotyrosine; by autocatalysis mark. Over residues 1145 to 1160 (WPQPPLALEGPLPPSR) the composition is skewed to pro residues. Residue Thr-1165 is modified to Phosphothreonine. The interval 1199–1201 (EYL) is interaction with PIK3C2B. Tyr-1200 is subject to Phosphotyrosine. Residues 1203–1259 (PRGRAAPQPHPPPAFSPAFDNLYYWDQDPSERGSPPSTFEGTPTAENPEYLGLDVPV) form a disordered region. Over residues 1237-1247 (PPSTFEGTPTA) the composition is skewed to polar residues. Tyr-1252 is subject to Phosphotyrosine; by autocatalysis.

Belongs to the protein kinase superfamily. Tyr protein kinase family. EGF receptor subfamily. As to quaternary structure, homodimer. Heterodimer with EGFR, ERBB3 and ERBB4. Part of a complex with EGFR and either PIK3C2A or PIK3C2B. May interact with PIK3C2B when phosphorylated on Tyr-1200. Interacts with PRKCABP and PLXNB1. Interacts (when phosphorylated on Tyr-1252) with MEMO1. Interacts with MUC1. Interacts (when phosphorylated on Tyr-1138) with GRB7 (via SH2 domain). Interacts (when phosphorylated on Tyr-1252) with ERBIN. Interacts with SRC, KPNB1, PTK6, RANBP2, EEA1, CRM1, CLTC, RPA194, MYOC and ACTB. Interacts (preferentially with the tyrosine phosphorylated form) with CPNE3; this interaction occurs at the cell membrane and is increased in a growth factor heregulin-dependent manner. Interacts with HSP90AA1 and HSP90AB1 in an ATP-dependent manner; the interaction suppresses ERBB2 kinase activity. Interacts with SORL1; this interaction regulates ERBB2 subcellular distribution by promoting its recycling after internalization from endosomes back to the plasma membrane, hence stimulates ERBB2-mediated signaling. Interacts with SH3BGRL. Interacts with ROR1. Post-translationally, autophosphorylated. Autophosphorylation occurs in trans, i.e. one subunit of the dimeric receptor phosphorylates tyrosine residues on the other subunit. Ligand-binding increases phosphorylation on tyrosine residues. Signaling via SEMA4C promotes phosphorylation at Tyr-1252. Dephosphorylated by PTPN12.

The protein resides in the cell membrane. It localises to the cell projection. Its subcellular location is the ruffle membrane. It is found in the early endosome. The protein localises to the cytoplasm. The protein resides in the perinuclear region. It localises to the nucleus. It carries out the reaction L-tyrosyl-[protein] + ATP = O-phospho-L-tyrosyl-[protein] + ADP + H(+). Protein tyrosine kinase that is part of several cell surface receptor complexes, but that apparently needs a coreceptor for ligand binding. Essential component of a neuregulin-receptor complex, although neuregulins do not interact with it alone. GP30 is a potential ligand for this receptor. Regulates outgrowth and stabilization of peripheral microtubules (MTs). Upon ERBB2 activation, the MEMO1-RHOA-DIAPH1 signaling pathway elicits the phosphorylation and thus the inhibition of GSK3B at cell membrane. This prevents the phosphorylation of APC and CLASP2, allowing its association with the cell membrane. In turn, membrane-bound APC allows the localization of MACF1 to the cell membrane, which is required for microtubule capture and stabilization. In terms of biological role, in the nucleus is involved in transcriptional regulation. Associates with the 5'-TCAAATTC-3' sequence in the PTGS2/COX-2 promoter and activates its transcription. Implicated in transcriptional activation of CDKN1A; the function involves STAT3 and SRC. Involved in the transcription of rRNA genes by RNA Pol I and enhances protein synthesis and cell growth. This Canis lupus familiaris (Dog) protein is Receptor tyrosine-protein kinase erbB-2 (ERBB2).